We begin with the raw amino-acid sequence, 455 residues long: Eukaryotic translation initiation factor 3 subunit E (455 aa).

The region spanning 256–425 (TDLFFSPAYI…GTVIMNHPPQ (170 aa)) is the PCI domain.

It belongs to the eIF-3 subunit E family. Component of the eukaryotic translation initiation factor 3 (eIF-3) complex.

It localises to the cytoplasm. Functionally, component of the eukaryotic translation initiation factor 3 (eIF-3) complex, which is involved in protein synthesis of a specialized repertoire of mRNAs and, together with other initiation factors, stimulates binding of mRNA and methionyl-tRNAi to the 40S ribosome. The eIF-3 complex specifically targets and initiates translation of a subset of mRNAs involved in cell proliferation. The polypeptide is Eukaryotic translation initiation factor 3 subunit E (int6) (Neosartorya fischeri (strain ATCC 1020 / DSM 3700 / CBS 544.65 / FGSC A1164 / JCM 1740 / NRRL 181 / WB 181) (Aspergillus fischerianus)).